The chain runs to 619 residues: Adagio protein 3 (619 aa).

In terms of domain architecture, PAS spans 44-123 (VGMFYYPMTP…SEIRRCLEEG (80 aa)). An S-4a-FMN cysteine modification is found at cysteine 91. Positions 127–168 (QGELLNFRKDGTPLVNRLRLAPIRDDDGTITHVIGIQVFSET) constitute a PAC domain. Residues 211–257 (ILQLSDEVLAHNILSRLTPRDVASIGSACRRLRQLTKNESVRKMVCQ) enclose the F-box domain. Kelch repeat units lie at residues 304–354 (SRCN…TSSP), 357–404 (RWGH…AGGT), 409–457 (RSWH…PTSW), 462–513 (RLGH…ECSA), and 523–571 (RLDH…NVPG).

The protein belongs to the ADAGIO family. As to quaternary structure, interacts with ADO1 (via Kelch repeats), ADO2 (via Kelch repeats), SKP1A/ASK1, SKP1B/ASK2, ASK3, SKP1K/ASK11, ASK12, ASK13 and SKP1N/ASK14. Interacts (via Kelch repeats) with CDF1, CDF2 and CDF3. Interacts (via N-terminus) with CO and GI (via N-terminus) in a blue-light-dependent manner. FMN binds covalently to cysteine after exposure to blue light and is reversed in the dark. As to expression, highly expressed in stomata and leaves and to a lower extent in seeds, roots, rosettes, stems and siliques. Also present in sepals and anther filaments.

The protein resides in the nucleus. It is found in the cytoplasm. Its pathway is protein modification; protein ubiquitination. Component of an E3 ubiquitin ligase complex that plays a central role in blue light-dependent circadian cycles. Acts as a blue light photoreceptor, due to the presence of FMN, that mediates light-regulated protein degradation of critical clock components by targeting them to the proteasome complex. The SCF(ADO3) E3 ubiquitin ligase complex is involved in the regulation of circadian clock-dependent processes including transition to flowering time, hypocotyl elongation, cotyledons and leaf movement rhythms. Forms a complex with 'GIGANTEA' (GI) to regulate 'CONSTANS' (CO) expression. Promotes CO expression during the light period of long days by decreasing the stability of CDF1 and CDF2 and by interacting directly with the CO protein and stabilizing it. ADO3 function is mainly GI dependent. Does not act as a regulator of CDF1 transcription. The interactions of ADO1/ZTL and ADO2 with ADO3 prevent its interaction with CDF1. In Arabidopsis thaliana (Mouse-ear cress), this protein is Adagio protein 3 (ADO3).